We begin with the raw amino-acid sequence, 278 residues long: MKYWNLKRNNQFAFEKVGPIPRSITNTFEKFRKELDPNGESEAIEEFRISRHQTITSVKYILLLFISPVLVNQASKFFVFGPCIDYLWNQEQPKIFLNSSQEERAFAELQRFEEKIHFEVLLNPSEDISYEIIEKRVQLKARELGEYYANESANAVKNILSDLVSILVFILLMITGQRQIAVVKSFLNEIIYGLSDTAKAFLIILFTDMFVGFHSPHGWEVIIEVILRHLGLPESRDFIFLFISTFPVILDTIFKYWIFRYLNQVSPSAVATYHNMNE.

Helical transmembrane passes span 61–81, 155–175, 203–223, and 238–258; these read ILLLFISPVLVNQASKFFVFG, AVKNILSDLVSILVFILLMIT, IILFTDMFVGFHSPHGWEVII, and FIFLFISTFPVILDTIFKYWI.

It belongs to the CemA family.

It localises to the plastid. The protein resides in the chloroplast inner membrane. The catalysed reaction is K(+)(in) + H(+)(out) = K(+)(out) + H(+)(in). Its function is as follows. Contributes to K(+)/H(+) antiport activity by supporting proton efflux to control proton extrusion and homeostasis in chloroplasts in a light-dependent manner to modulate photosynthesis. Prevents excessive induction of non-photochemical quenching (NPQ) under continuous-light conditions. Indirectly promotes efficient inorganic carbon uptake into chloroplasts. This chain is Potassium/proton antiporter CemA, found in Pyropia yezoensis (Susabi-nori).